The chain runs to 1638 residues: MENLFEKLMEQIKMPPNLRRSSQFEHADIENVEVHTASKLWHFQLIFDEILPIDTYKLLTELTETAFSTIARTEISVSSRNQNIDEQNLNDYYQYALTLPELCDSAFSSIFKKYHLEKEEEKIHLMVEDNPQMDFFVEKYFPILEEKFKSFGFGEVRITPLVDQELTETQAAAHAEKVAARLAAQTAEQAQISEIKKQRSEERESKNTREAKPEFVETALSDGIFFGRKISGQSPITSMSFIAGEGFGVIFEGLVFEAAHREFTGKESGKVNHILELKMADETSTFMISKWGRKDEEIAQFDQIVSTVKAMNEKIIADRTDGEDNFTDSLSDALWLRVQGNIEHDKYKDDLVLTANAVVEIKPKPTIDRVALQIKAVKSDKIQLGREIKNNEPVTPMRSVSEFSTNGPVVFEGYVFKGELREIKSRKTGNISYLLEFEMTDYTSSFYVQKWLRGEEEIQLAKQIKAGLWCRVRGNVQRDNFKNDLVLQLTDLIEIPTQNVREDKSDEKRVEFHAHTNMSQMDAIPSASSLVAQAAKWGHKAIAITDHGGLQSFPEAHSAGKKNGVKIIYGVEANLVEDKIPIVYNETDVDMYESTYVVFDVETTGLSAVHNDLIQIAATKMHKGNPIDEFDEFINPGYRLSEFTTELTGITDDHVKNAKPLYEVLTKFQKFCEGTILVAHNATFDVGFMNMNYSRNGLPIITQPVVDTLEFARNLYPEMKRFGLGQLTKKFQIGLEHHHMANFDAEATGRLLFVFLEELRTRNTGWTSLLELNDKLVSEDSYKKVRPKHVTLYAKTQEGLKNLFKIVSFGNVKYYAGLPRVPRSVLEANREGLLVGSACEIGEVFDAAINKTFEETLEIAKFYDFIEVFPPALYRSLVVGGSFKSEKELEQTLKDLIKIGKTLGKPVLATGNLHYLNPEDAIYREIIVRSLGLGAEINWTQGHGEHAKPLPLPEAHFRTTDEMLEAFSFLDEKTAREIVIDNTQKMADEFDVLTPVRDDLYTPKMVFDGGETSEERIVRLTYEKAHEWYGNPLPDIIDARLEKELRSILGNGFSVVYIISQELVKRSNDRGYIVGSRGSVGSSLVATMIGITEVNPLAPHYRCPECQYFECYDDGSFGSGYDMPDKNCPKCDHKLIKDGHDIPFETFLGFKGDKVPDIDLNFSGDDQPLAHLDVRDIFGEDYAFRAGTIGTVAEKTAFGFVKGYERDYDQFYGNAEIDRLAAGSTGVKRTTGQHPGGIIVIPNYMDVYDFSPVQFPADDVNAEWQTTHFDFHAIHDNILKLDILGHDDPTMIRKLQSLSGIVPQDIPMDDPGVMKLFTGTESLGLTEEQLGVKLGTLGIPEMGTFTSMNMIAEAKPKNFADLLQISGLSHGTDVWSGNAQDLIRSGIADLSSVIGCRDDIMVYLIHKGLENGLAFTIMERVRKGMWNKIPAEEREKYVEAMREHDVPEWYIESCSKIKYMFPKAHAAAYIMMALRVAYFKVHHPILYYCAWFSIRATAFDIGVMGAGLEAVKAKMKEIKDKGFDATNVETNLYTTLELCNEMLERGFTFGKIDLYRSEATEFVIDGDTLIPPFVTMDGLGENVAKQIVAARAEGEFLSKMELRKRGGVSQTIIENMTNMGVLEGMPDDNQLSLFDDFF.

The segment at 193 to 212 is disordered; sequence SEIKKQRSEERESKNTREAK. Basic and acidic residues predominate over residues 194-212; that stretch reads EIKKQRSEERESKNTREAK. Residues 596–752 enclose the Exonuclease domain; sequence YVVFDVETTG…FDAEATGRLL (157 aa).

This sequence belongs to the DNA polymerase type-C family. PolC subfamily.

It localises to the cytoplasm. The enzyme catalyses DNA(n) + a 2'-deoxyribonucleoside 5'-triphosphate = DNA(n+1) + diphosphate. Functionally, required for replicative DNA synthesis. This DNA polymerase also exhibits 3' to 5' exonuclease activity. This Lactococcus lactis subsp. lactis (strain IL1403) (Streptococcus lactis) protein is DNA polymerase III PolC-type.